The primary structure comprises 494 residues: E3 ubiquitin-protein ligase ari-1.1 (494 aa).

A compositionally biased stretch (acidic residues) spans 1 to 30 (MSSDDEINMDDSDSSQGEIDDGCMSDDDGI). Residues 1-52 (MSSDDEINMDDSDSSQGEIDDGCMSDDDGIVLESREQNSSDYKDNGEPDNEV) form a disordered region. The segment covering 33-52 (ESREQNSSDYKDNGEPDNEV) has biased composition (basic and acidic residues). Residues 124–331 (GDAECDICCS…SSWYSCNRFD (208 aa)) form a TRIAD supradomain region. Positions 128, 131, 142, 144, 147, 150, 169, 174, 214, 219, 235, 237, 242, 245, 250, 255, 282, and 285 each coordinate Zn(2+). An RING-type 1 zinc finger spans residues 128–174 (CDICCSLGELSGLSCNHRACTQCWKAYLTNKIANNAQSEIECMAPNC). The segment at 194-255 (ATYRKLIVAS…GHDWHEPVNC (62 aa)) adopts an IBR-type zinc-finger fold. The RING-type 2; atypical zinc finger occupies 282–313 (CPKCMITIEKDGGCNHMTCKNTACRFEFCWMC). Cys295 is a catalytic residue. Zn(2+)-binding residues include Cys300, Cys305, Cys310, Cys313, His320, and Cys327. Positions 346-494 (RANLQRYLFY…ADQELWVFNE (149 aa)) are ariadne domain.

The protein belongs to the RBR family. Ariadne subfamily. In terms of assembly, interacts with ubiquitin-conjugating enzyme E2 ubc-18.

Its subcellular location is the nucleus. The protein resides in the cytoplasm. The enzyme catalyses [E2 ubiquitin-conjugating enzyme]-S-ubiquitinyl-L-cysteine + [acceptor protein]-L-lysine = [E2 ubiquitin-conjugating enzyme]-L-cysteine + [acceptor protein]-N(6)-ubiquitinyl-L-lysine.. Its activity is regulated as follows. Autoinhibited by the ariadne domain, which masks the second RING-type zinc finger that contains the active site and inhibits the E3 activity. E3 ubiquitin-protein transferase, which catalyzes ubiquitination of target proteins together with ubiquitin-conjugating enzyme E2 ubc-18. Acts with ubc-18 to regulate pharyngeal development. The chain is E3 ubiquitin-protein ligase ari-1.1 from Caenorhabditis elegans.